We begin with the raw amino-acid sequence, 413 residues long: Palmitoyltransferase ZDHHC6 (413 aa).

At 1–24 the chain is on the cytoplasmic side; it reads MGTFCSVIKFENLQELKRLCHWGP. A helical membrane pass occupies residues 25–45; the sequence is IIALGVIAICSTMAMIDSVLW. Residues 46 to 57 lie on the Lumenal side of the membrane; the sequence is YWPLHTTGGSVN. The helical transmembrane segment at 58–78 threads the bilayer; that stretch reads FIMLINWTVMILYNYFNAMFV. Over 79-143 the chain is Cytoplasmic; the sequence is GPGFVPLGWK…NCCGYQNHAS (65 aa). Residues 99 to 149 enclose the DHHC domain; that stretch reads QYCKVCQAYKAPRSHHCRKCNRCVMKMDHHCPWINNCCGYQNHASFTLFLL. Catalysis depends on Cys129, which acts as the S-palmitoyl cysteine intermediate. A helical transmembrane segment spans residues 144 to 164; the sequence is FTLFLLLAPLGCIHAAFIFVM. Residues 165–205 lie on the Lumenal side of the membrane; the sequence is TMYTQLYHRLSFGWNTVKIDMSAARRDPLPIVPFGLAAFAT. The chain crosses the membrane as a helical span at residues 206–226; sequence TLFALGLALGTTIAVGMLFFI. Residues 227-413 lie on the Cytoplasmic side of the membrane; the sequence is QMKIILRNKT…QAPEGEKKNR (187 aa). In terms of domain architecture, SH3 spans 313–398; sequence VRSVRYKVIE…PRKCVEKCPC (86 aa). 3 S-palmitoyl cysteine lipidation sites follow: Cys328, Cys329, and Cys343. The short motif at 410-413 is the Di-lysine motif element; it reads KKNR.

It belongs to the DHHC palmitoyltransferase family. In terms of assembly, homooligomerizes. Interacts with SELENOK. Post-translationally, palmitoylated at 3 different sites by ZDHHC16. The combination of the different palmitoylation events strongly affects the quaternary assembly of ZDHHC6, its localization, stability and function. Palmitoylation at Cys-328 accelerates the turnover of ZDHHC6. Depalmitoylated by LYPLA2.

Its subcellular location is the endoplasmic reticulum membrane. It carries out the reaction L-cysteinyl-[protein] + hexadecanoyl-CoA = S-hexadecanoyl-L-cysteinyl-[protein] + CoA. The catalysed reaction is L-cysteinyl-[protein] + octadecanoyl-CoA = S-octadecanoyl-L-cysteinyl-[protein] + CoA. Its function is as follows. Endoplasmic reticulum palmitoyl acyltransferase that mediates palmitoylation of proteins such as AMFR, CALX, ITPR1 and TFRC. Palmitoylates calnexin (CALX), which is required for its association with the ribosome-translocon complex and efficient folding of glycosylated proteins. Mediates palmitoylation of AMFR, promoting AMFR distribution to the peripheral endoplasmic reticulum. Together with SELENOK, palmitoylates ITPR1 in immune cells, leading to regulate ITPR1 stability and function. Stearoyltransferase that mediates stearoylation of TFRC to inhibit TFRC-mediated activation of the JNK pathway and mitochondrial fragmentation. The sequence is that of Palmitoyltransferase ZDHHC6 from Homo sapiens (Human).